The sequence spans 111 residues: Inner membrane protein YdgC (111 aa).

At 1–26 (MGLVIKAALGALVVLLIGVLAKTKNY) the chain is on the cytoplasmic side. A helical transmembrane segment spans residues 27–47 (YIAGLIPLFPTFALIAHYIVA). Topologically, residues 48–58 (SERGIEALRAT) are periplasmic. Residues 59–79 (IIFSMWSIIPYFVYLVSLWYF) traverse the membrane as a helical segment. The Cytoplasmic segment spans residues 80 to 87 (TGMMRLPA). Residues 88-108 (AFVGSVACWGISAWVLIICWI) traverse the membrane as a helical segment. The Periplasmic portion of the chain corresponds to 109 to 111 (KLH).

To P.aeruginosa GlpM.

Its subcellular location is the cell inner membrane. This is Inner membrane protein YdgC (ydgC) from Escherichia coli O157:H7.